Here is a 360-residue protein sequence, read N- to C-terminus: Aminomethyltransferase (360 aa).

Belongs to the GcvT family. In terms of assembly, the glycine cleavage system is composed of four proteins: P, T, L and H.

The enzyme catalyses N(6)-[(R)-S(8)-aminomethyldihydrolipoyl]-L-lysyl-[protein] + (6S)-5,6,7,8-tetrahydrofolate = N(6)-[(R)-dihydrolipoyl]-L-lysyl-[protein] + (6R)-5,10-methylene-5,6,7,8-tetrahydrofolate + NH4(+). Its function is as follows. The glycine cleavage system catalyzes the degradation of glycine. This Bdellovibrio bacteriovorus (strain ATCC 15356 / DSM 50701 / NCIMB 9529 / HD100) protein is Aminomethyltransferase.